The primary structure comprises 339 residues: Dehydrogenase/reductase SDR family member 7 (339 aa).

The N-terminal stretch at 1–28 (MNWELLLWLLVLCALLLLLVQLLRFLRA) is a signal peptide. NAD(+) contacts are provided by serine 60 and isoleucine 62. Position 190 (serine 190) interacts with substrate. Residues tyrosine 203, lysine 207, and serine 239 each contribute to the NAD(+) site. Tyrosine 203 functions as the Proton acceptor in the catalytic mechanism.

It belongs to the short-chain dehydrogenases/reductases (SDR) family. In terms of tissue distribution, found predominantly in the adrenal glands, liver, thyroid, prostate, small intestine, colon, stomach, kidney and brain. Lower levels observed in skeletal muscle, the lung and the spleen.

The protein localises to the endoplasmic reticulum membrane. The enzyme catalyses all-trans-retinol + NADP(+) = all-trans-retinal + NADPH + H(+). It catalyses the reaction 5alpha-androstane-3alpha,17beta-diol + NADP(+) = 17beta-hydroxy-5alpha-androstan-3-one + NADPH + H(+). In terms of biological role, NADPH-dependent oxidoreductase which catalyzes the reduction of a variety of compounds bearing carbonyl groups including steroids, retinoids and xenobiotics. Catalyzes the reduction/inactivation of 5alpha-dihydrotestosterone to 3alpha-androstanediol, with a possible role in the modulation of androgen receptor function. Involved in the reduction of all-trans-retinal to all-trans-retinol. Converts cortisone to 20beta-dihydrocortisone in vitro, although the physiological relevance of this activity is questionable. Reduces exogenous compounds such as quinones (1,2-naphtoquinone, 9,10-phenantrenequinone and benzoquinone) and other xenobiotics (alpha-diketones) in vitro, suggesting a role in the biotransformation of xenobiotics with carbonyl group. A dehydrogenase activity has not been detected so far. May play a role as tumor suppressor. The protein is Dehydrogenase/reductase SDR family member 7 of Homo sapiens (Human).